A 271-amino-acid polypeptide reads, in one-letter code: DNA-directed RNA polymerase subunit Rpo3 (271 aa).

Belongs to the archaeal Rpo3/eukaryotic RPB3 RNA polymerase subunit family. In terms of assembly, part of the RNA polymerase complex.

Its subcellular location is the cytoplasm. It carries out the reaction RNA(n) + a ribonucleoside 5'-triphosphate = RNA(n+1) + diphosphate. DNA-dependent RNA polymerase (RNAP) catalyzes the transcription of DNA into RNA using the four ribonucleoside triphosphates as substrates. This Picrophilus torridus (strain ATCC 700027 / DSM 9790 / JCM 10055 / NBRC 100828 / KAW 2/3) protein is DNA-directed RNA polymerase subunit Rpo3.